Reading from the N-terminus, the 947-residue chain is Protocadherin alpha-4 (947 aa).

An N-terminal signal peptide occupies residues 1-29 (MEFSWGSGQESQRLLLSFLFLAIWEPGNS). 6 consecutive Cadherin domains span residues 30-133 (QLHY…PPTF), 134-242 (PTTQ…SPVF), 243-350 (DRSL…APEL), 351-455 (EFKS…APAF), 456-565 (AQPE…APTL), and 573-681 (SGGI…APSR). Residues 30–697 (QLHYSIPEEA…NAEASLVDVN (668 aa)) are Extracellular-facing. A disulfide bridge connects residues cysteine 96 and cysteine 102. 2 N-linked (GlcNAc...) asparagine glycosylation sites follow: asparagine 257 and asparagine 265. N-linked (GlcNAc...) asparagine glycosylation is present at asparagine 548. The chain crosses the membrane as a helical span at residues 698 to 718 (VYLIIAICAVSSLLVLTLLLY). At 719-947 (SALRCSTVPS…GNSTTDNSDQ (229 aa)) the chain is on the cytoplasmic side. PXXP repeat units follow at residues 734–737 (PPKP), 774–777 (PSLS), 796–799 (PRQP), 829–832 (PGGP), 870–873 (PGNP), and 888–891 (PGSP). A 6 X 4 AA repeats of P-X-X-P region spans residues 734-891 (PPKPVMVCSS…PDKFIIPGSP (158 aa)). The tract at residues 738–947 (VMVCSSAVGS…GNSTTDNSDQ (210 aa)) is required for interaction with FYN. Disordered stretches follow at residues 761-805 (GEYP…DWRY) and 824-853 (ILRAGPGGPDQQWPTVSSATPEPEAGEVSP). The interval 897–947 (RQESANNQIDKSDFITFGKKEETKKKKKKKKGNKTQEKKEKGNSTTDNSDQ) is disordered. Positions 906-920 (DKSDFITFGKKEETK) are enriched in basic and acidic residues.

As to quaternary structure, forms homodimers in trans (molecules expressed by two different cells). Forms promiscuous heterodimers in cis (at the plasma membrane of the same cell) with other protocadherins. Interacts with FYN. In terms of tissue distribution, detected in brain.

Its subcellular location is the cell membrane. Its function is as follows. Calcium-dependent cell-adhesion protein involved in cells self-recognition and non-self discrimination. Thereby, it is involved in the establishment and maintenance of specific neuronal connections in the brain. This chain is Protocadherin alpha-4, found in Rattus norvegicus (Rat).